The primary structure comprises 90 residues: Small ribosomal subunit protein uS15 (90 aa).

The protein belongs to the universal ribosomal protein uS15 family. In terms of assembly, part of the 30S ribosomal subunit. Forms a bridge to the 50S subunit in the 70S ribosome, contacting the 23S rRNA.

One of the primary rRNA binding proteins, it binds directly to 16S rRNA where it helps nucleate assembly of the platform of the 30S subunit by binding and bridging several RNA helices of the 16S rRNA. Functionally, forms an intersubunit bridge (bridge B4) with the 23S rRNA of the 50S subunit in the ribosome. The sequence is that of Small ribosomal subunit protein uS15 from Wolbachia pipientis subsp. Culex pipiens (strain wPip).